We begin with the raw amino-acid sequence, 431 residues long: Serine hydroxymethyltransferase (431 aa).

(6S)-5,6,7,8-tetrahydrofolate-binding positions include Leu-128 and 132 to 134 (GHL). Lys-237 carries the post-translational modification N6-(pyridoxal phosphate)lysine.

The protein belongs to the SHMT family. As to quaternary structure, homodimer. The cofactor is pyridoxal 5'-phosphate.

The protein resides in the cytoplasm. The catalysed reaction is (6R)-5,10-methylene-5,6,7,8-tetrahydrofolate + glycine + H2O = (6S)-5,6,7,8-tetrahydrofolate + L-serine. The protein operates within one-carbon metabolism; tetrahydrofolate interconversion. It functions in the pathway amino-acid biosynthesis; glycine biosynthesis; glycine from L-serine: step 1/1. In terms of biological role, catalyzes the reversible interconversion of serine and glycine with tetrahydrofolate (THF) serving as the one-carbon carrier. This reaction serves as the major source of one-carbon groups required for the biosynthesis of purines, thymidylate, methionine, and other important biomolecules. Also exhibits THF-independent aldolase activity toward beta-hydroxyamino acids, producing glycine and aldehydes, via a retro-aldol mechanism. This is Serine hydroxymethyltransferase from Ruegeria sp. (strain TM1040) (Silicibacter sp.).